We begin with the raw amino-acid sequence, 361 residues long: Protein SSUH2 homolog (361 aa).

It is found in the cytoplasm. The protein resides in the nucleus. Plays a role in odontogenesis. The polypeptide is Protein SSUH2 homolog (Danio rerio (Zebrafish)).